The following is a 29-amino-acid chain: Dermaseptin-J8 (29 aa).

In terms of tissue distribution, expressed by the skin glands.

It is found in the secreted. Its function is as follows. Has antimicrobial activity. This Phasmahyla jandaia (Jandaia leaf frog) protein is Dermaseptin-J8.